A 1687-amino-acid chain; its full sequence is MDDAVCPTETDNVQNKQKATTPKRTQRRGGKQQLDRPERALFCLTLKNPLRIFCIKIVDSKLFEYFILLTIFANCVALAVYTPYPSGDSNITNQMLEKIEYIFLVIFTSECVMKIIAYGFVLHTGSYLRNGWNFLDFFIVVIGMISTALSNLVKEGFDVKALRAFRVLRPLRLVSGVPSLQVVLNSILKAMIPLLHIALLVLFVIIIYAIIGLELFSGKLHKTCRHSNTGEYLNDLDELHACGVGFKCPSGYECFDDWVGPNDGITNFDNFGLSMLTVFQCITLEGWTDVLYSIQDAMGSSWEWIYFVSMVILGAFFVMNLILGVLSGEFSKERTKAKNRGDFQKLREKQQIEEDLRGYLDWITQAEDIEPDPDAQIIEDCHKNKVKEVVSIDNLKDHENETQQTDSWFRSQKKYLERINRRIRRACRKAVKSQAFYWLIILLVFLNTGVLATEHYRQPIWLDQFQEYTNIFFIALFTCEMILKMYSLGFQGYFVSLFNRFDCFVVIGSISEMVLTSSELMAPLGVSVLRCVRLLRVFKVTKYWHSLSNLVASLLNSIQSIASLLLLLFLFIVIFGLLGMQVFGGRFTFKPEEEKPRSNFDSFYQSLLTVFQILTGEDWNVVMYDGIRAYGGVFSFGIVACIYYIILFICGNYILLNVFLAIAVDNLADADSLSTIEKEDESQIQLDNQIKNEMENEEYLQNGDHISFKAEFGADLDTYLQDEECGSYSDDENTYNKLGGVKQRVSSLPRRNTNTDMDRIKKDIPYGTSFFIFSHTNRFRIFCHRLCNHSNFGNFILCCIMFSSAMLAAENPLKADASRNIVLNKFDYFFTAVFTIELVLKLISYGFVLHDGAFCRSAFNLLDLLVVCVSLISIFFNSNAISVVKILRVLRVLRPLRAINRAKGLKHVVQCVIVAVKTIGNIVLVTCLLQFMFAVIGVQLFKGKFFSCSDGSKVYESDCHGTYLFYENGDINKPRLKEREWKNNKFHFDDVAKAMLTLFTVSTFEGWPTLLYVSIDSNKENGGPIYNFRPIVAAYYIIYIIIIAFFMVNIFVGFVIVTFQNEGEQEYKNCELDKNQRNCIEFALKAKPVRRYIPKHSIQYKVWWFVTSSSFEYSIFVLIMINTVTLAMKFYKQPEYYSEILDALNMIFTAVFSLEFIFKLAAFRFKNYFGDAWNTFDFIIVLGSFIDIVYSEIKTKEQALATCDGQSCNKAKGGSTLISINFFRLFRVMRLVKLLSKGEGIRTLLWTFIKSFQALPYVALLIVMLFFIYAVIGMQVFGKIMLEEGTSIDRNNNFQTFPQAVLVLFRSATGEAWQEIMMACSPRDDVKCDPESDAVNNCGSSIAFPYFISFYVLCSFLIINLFVAVIMDNFDYLTRDWSILGPHHLDEFIRLWSEYDPDAKGRIKHLDVVTLLRKISPPLGFGKLCPHRMACKRLVSMNMPLNSDGTVLFNATLFAVVRLPLAIKTDGNIDEANAELRATIKQIWKRTNPRLLDQVVLTGNDDEVTVGKFYATYLIQDYFRRFKKRKEQEGKCDQTENAVTLQAGLRTLQQNSPALKRTISGYLDELASEADPMHRRHHSLFGKVMSSLLRHEEITSSKIKHLSRTKTIPYQVEFLQHKVQLERNKDCLTSASDDISIEKIIRKQNKYNGQYFNSEANFMDNIKYTPRYDGEEYEMEDPKSKDKDEEF.

The segment at 1-33 (MDDAVCPTETDNVQNKQKATTPKRTQRRGGKQQ) is disordered. Over 1-61 (MDDAVCPTET…IFCIKIVDSK (61 aa)) the chain is Cytoplasmic. The span at 9–23 (ETDNVQNKQKATTPK) shows a compositional bias: polar residues. An I repeat occupies 48-330 (NPLRIFCIKI…LILGVLSGEF (283 aa)). A helical membrane pass occupies residues 62 to 80 (LFEYFILLTIFANCVALAV). The Extracellular segment spans residues 81–99 (YTPYPSGDSNITNQMLEKI). Residue Asn90 is glycosylated (N-linked (GlcNAc...) asparagine). A helical membrane pass occupies residues 100–117 (EYIFLVIFTSECVMKIIA). Residues 118-130 (YGFVLHTGSYLRN) lie on the Cytoplasmic side of the membrane. A helical transmembrane segment spans residues 131–145 (GWNFLDFFIVVIGMI). Residues 146-157 (STALSNLVKEGF) are Extracellular-facing. Residues 158–176 (DVKALRAFRVLRPLRLVSG) form a helical membrane-spanning segment. At 177–196 (VPSLQVVLNSILKAMIPLLH) the chain is on the cytoplasmic side. Residues 197-216 (IALLVLFVIIIYAIIGLELF) form a helical membrane-spanning segment. Residues 217–302 (SGKLHKTCRH…SIQDAMGSSW (86 aa)) lie on the Extracellular side of the membrane. Glu285 provides a ligand contact to Ca(2+). The helical transmembrane segment at 303 to 327 (EWIYFVSMVILGAFFVMNLILGVLS) threads the bilayer. The Cytoplasmic segment spans residues 328 to 434 (GEFSKERTKA…RACRKAVKSQ (107 aa)). The stretch at 420-667 (NRRIRRACRK…VFLAIAVDNL (248 aa)) is one II repeat. Residues 435–454 (AFYWLIILLVFLNTGVLATE) form a helical membrane-spanning segment. Residues 455–467 (HYRQPIWLDQFQE) are Extracellular-facing. A helical membrane pass occupies residues 468–487 (YTNIFFIALFTCEMILKMYS). The Cytoplasmic segment spans residues 488 to 496 (LGFQGYFVS). A helical transmembrane segment spans residues 497 to 515 (LFNRFDCFVVIGSISEMVL). The Extracellular segment spans residues 516–525 (TSSELMAPLG). The chain crosses the membrane as a helical span at residues 526 to 544 (VSVLRCVRLLRVFKVTKYW). At 545–563 (HSLSNLVASLLNSIQSIAS) the chain is on the cytoplasmic side. The helical transmembrane segment at 564-583 (LLLLLFLFIVIFGLLGMQVF) threads the bilayer. The Extracellular segment spans residues 584-639 (GGRFTFKPEEEKPRSNFDSFYQSLLTVFQILTGEDWNVVMYDGIRAYGGVFSFGIV). Glu617 lines the Ca(2+) pocket. The chain crosses the membrane as a helical span at residues 640 to 664 (ACIYYIILFICGNYILLNVFLAIAV). Residues 665-785 (DNLADADSLS…TNRFRIFCHR (121 aa)) are Cytoplasmic-facing. The III repeat unit spans residues 777–1059 (NRFRIFCHRL…IFVGFVIVTF (283 aa)). The helical transmembrane segment at 786-809 (LCNHSNFGNFILCCIMFSSAMLAA) threads the bilayer. The Extracellular portion of the chain corresponds to 810 to 826 (ENPLKADASRNIVLNKF). Residues 827-846 (DYFFTAVFTIELVLKLISYG) traverse the membrane as a helical segment. Residues 847–854 (FVLHDGAF) lie on the Cytoplasmic side of the membrane. The helical transmembrane segment at 855-877 (CRSAFNLLDLLVVCVSLISIFFN) threads the bilayer. The Extracellular segment spans residues 878–885 (SNAISVVK). The helical transmembrane segment at 886–900 (ILRVLRVLRPLRAIN) threads the bilayer. At 901 to 921 (RAKGLKHVVQCVIVAVKTIGN) the chain is on the cytoplasmic side. A helical membrane pass occupies residues 922 to 941 (IVLVTCLLQFMFAVIGVQLF). The Extracellular segment spans residues 942-1030 (KGKFFSCSDG…NGGPIYNFRP (89 aa)). A dihydropyridine binding region spans residues 979–1068 (REWKNNKFHF…FQNEGEQEYK (90 aa)). Position 1005 (Glu1005) interacts with Ca(2+). Residues 1031 to 1055 (IVAAYYIIYIIIIAFFMVNIFVGFV) traverse the membrane as a helical segment. Over 1056–1110 (IVTFQNEGEQEYKNCELDKNQRNCIEFALKAKPVRRYIPKHSIQYKVWWFVTSSS) the chain is Cytoplasmic. The IV repeat unit spans residues 1096 to 1370 (HSIQYKVWWF…LFVAVIMDNF (275 aa)). A helical membrane pass occupies residues 1111–1129 (FEYSIFVLIMINTVTLAMK). Topologically, residues 1130 to 1143 (FYKQPEYYSEILDA) are extracellular. Residues 1144–1163 (LNMIFTAVFSLEFIFKLAAF) traverse the membrane as a helical segment. The Cytoplasmic segment spans residues 1164-1172 (RFKNYFGDA). Residues 1173-1191 (WNTFDFIIVLGSFIDIVYS) traverse the membrane as a helical segment. At 1192 to 1219 (EIKTKEQALATCDGQSCNKAKGGSTLIS) the chain is on the extracellular side. Residues 1220-1238 (INFFRLFRVMRLVKLLSKG) traverse the membrane as a helical segment. Residues 1239–1257 (EGIRTLLWTFIKSFQALPY) lie on the Cytoplasmic side of the membrane. The chain crosses the membrane as a helical span at residues 1258-1277 (VALLIVMLFFIYAVIGMQVF). Residues 1278–1343 (GKIMLEEGTS…AVNNCGSSIA (66 aa)) are Extracellular-facing. The interval 1327–1389 (KCDPESDAVN…LGPHHLDEFI (63 aa)) is dihydropyridine binding. The interval 1337–1378 (NCGSSIAFPYFISFYVLCSFLIINLFVAVIMDNFDYLTRDWS) is phenylalkylamine binding. The chain crosses the membrane as a helical span at residues 1344–1362 (FPYFISFYVLCSFLIINLF). The Cytoplasmic segment spans residues 1363-1687 (VAVIMDNFDY…PKSKDKDEEF (325 aa)).

The protein belongs to the calcium channel alpha-1 subunit (TC 1.A.1.11) family. As to expression, predominantly expressed in the larval body wall musculature. In adults, highest expression in thorax followed by head and at a lower extent by abdomen.

It is found in the membrane. Its function is as follows. Voltage-sensitive calcium channels (VSCC) mediate the entry of calcium ions into excitable cells and are also involved in a variety of calcium-dependent processes, including muscle contraction, hormone or neurotransmitter release, gene expression, cell motility, cell division and cell death. MDL-alpha1 encodes a dihydropyridine- and diltiazem-sensitive current in larval body wall muscle. The protein is Muscle calcium channel subunit alpha-1 of Musca domestica (House fly).